We begin with the raw amino-acid sequence, 139 residues long: Nucleoside diphosphate kinase (139 aa).

Positions 10, 58, 86, 92, 103, and 113 each coordinate ATP. His116 serves as the catalytic Pros-phosphohistidine intermediate.

The protein belongs to the NDK family. As to quaternary structure, homotetramer. It depends on Mg(2+) as a cofactor.

It is found in the cytoplasm. The enzyme catalyses a 2'-deoxyribonucleoside 5'-diphosphate + ATP = a 2'-deoxyribonucleoside 5'-triphosphate + ADP. It carries out the reaction a ribonucleoside 5'-diphosphate + ATP = a ribonucleoside 5'-triphosphate + ADP. Major role in the synthesis of nucleoside triphosphates other than ATP. The ATP gamma phosphate is transferred to the NDP beta phosphate via a ping-pong mechanism, using a phosphorylated active-site intermediate. In Nitratidesulfovibrio vulgaris (strain DSM 19637 / Miyazaki F) (Desulfovibrio vulgaris), this protein is Nucleoside diphosphate kinase.